Consider the following 105-residue polypeptide: MLLNKITFFERFEHDILSGAKTITLRDEAESHVITGQILPVSTFETDRWFCDIQIIDVTPVKLTELTEMHAKQENMTLPQLRDVIAEIYPGLEQLFMIRFMILSQ.

Residues 7–93 (TFFERFEHDI…VIAEIYPGLE (87 aa)) form the ASCH domain. The active-site Proton acceptor is Lys-21. The active-site Nucleophile is the Thr-24. The active-site Proton donor is Glu-74.

This sequence belongs to the N(4)-acetylcytidine amidohydrolase family.

The enzyme catalyses N(4)-acetylcytidine + H2O = cytidine + acetate + H(+). The catalysed reaction is N(4)-acetyl-2'-deoxycytidine + H2O = 2'-deoxycytidine + acetate + H(+). It catalyses the reaction N(4)-acetylcytosine + H2O = cytosine + acetate + H(+). Catalyzes the hydrolysis of N(4)-acetylcytidine (ac4C). This chain is N(4)-acetylcytidine amidohydrolase, found in Shewanella baltica (strain OS185).